A 196-amino-acid chain; its full sequence is Putative AAA family ATPase L572 (196 aa).

32-39 contributes to the ATP binding site; that stretch reads NAVNCKET.

This sequence belongs to the AAA ATPase family.

In Acanthamoeba polyphaga mimivirus (APMV), this protein is Putative AAA family ATPase L572.